The primary structure comprises 424 residues: Glutamyl-tRNA reductase (424 aa).

Substrate is bound by residues 49–52, Ser-105, 110–112, and Gln-116; these read TCNR and EPQ. Catalysis depends on Cys-50, which acts as the Nucleophile. 185-190 provides a ligand contact to NADP(+); that stretch reads GSGETA.

It belongs to the glutamyl-tRNA reductase family. In terms of assembly, homodimer.

The enzyme catalyses (S)-4-amino-5-oxopentanoate + tRNA(Glu) + NADP(+) = L-glutamyl-tRNA(Glu) + NADPH + H(+). Its pathway is porphyrin-containing compound metabolism; protoporphyrin-IX biosynthesis; 5-aminolevulinate from L-glutamyl-tRNA(Glu): step 1/2. Functionally, catalyzes the NADPH-dependent reduction of glutamyl-tRNA(Glu) to glutamate 1-semialdehyde (GSA). The chain is Glutamyl-tRNA reductase from Legionella pneumophila (strain Paris).